Consider the following 283-residue polypeptide: DegV domain-containing protein lin2658 (283 aa).

Residues 5–282 enclose the DegV domain; that stretch reads IAVVTDSTTY…EGALGLTWSI (278 aa). Ser63 and Ser96 together coordinate hexadecanoate.

Its function is as follows. May bind long-chain fatty acids, such as palmitate, and may play a role in lipid transport or fatty acid metabolism. The sequence is that of DegV domain-containing protein lin2658 from Listeria innocua serovar 6a (strain ATCC BAA-680 / CLIP 11262).